The sequence spans 115 residues: Glutaredoxin 4 (115 aa).

Residues 5 to 107 (IEKIQRQIAE…QLIKETAAKY (103 aa)) form the Glutaredoxin domain. Lysine 22 is a glutathione binding site. Residue cysteine 30 coordinates [2Fe-2S] cluster. Glutathione is bound by residues arginine 59, phenylalanine 71, and 84–85 (CD).

The protein belongs to the glutaredoxin family. Monothiol subfamily. Homodimer.

The protein resides in the cytoplasm. In terms of biological role, monothiol glutaredoxin involved in the biogenesis of iron-sulfur clusters. This is Glutaredoxin 4 (grxD) from Shigella flexneri.